Here is a 79-residue protein sequence, read N- to C-terminus: MSLHLTLVLSGKNLKIVVESINVVTARSERSSLLDCKRCCKRPNIPHTETVDFVWGFNVETRLIAAETQSDFGRKHPGR.

This is an uncharacterized protein from Dryophytes versicolor (chameleon treefrog).